Consider the following 525-residue polypeptide: CBL-interacting protein kinase 21 (525 aa).

The Protein kinase domain maps to 87-342 (YEMGRALGEG…ITGIRAHEWF (256 aa)). Residues 93-101 (LGEGHFGKV) and K116 contribute to the ATP site. The active-site Proton acceptor is the D210. The activation loop stretch occupies residues 228 to 257 (DFGLSALPQNQRKDGLLHTTCGSPNYIAPE). Residues 372-401 (DIETSPAISQINAFQLIGMSSCLDLSGFFE) enclose the NAF domain. The tract at residues 407–436 (ERKIRFVSNYSPTSLFEKIESTVTEKGFQV) is PPI.

The protein belongs to the protein kinase superfamily. CAMK Ser/Thr protein kinase family. SNF1 subfamily. Mn(2+) serves as cofactor.

The catalysed reaction is L-seryl-[protein] + ATP = O-phospho-L-seryl-[protein] + ADP + H(+). The enzyme catalyses L-threonyl-[protein] + ATP = O-phospho-L-threonyl-[protein] + ADP + H(+). Functionally, CIPK serine-threonine protein kinases interact with CBL proteins. Binding of a CBL protein to the regulatory NAF domain of CIPK protein lead to the activation of the kinase in a calcium-dependent manner. The sequence is that of CBL-interacting protein kinase 21 (CIPK21) from Oryza sativa subsp. japonica (Rice).